The sequence spans 386 residues: Patatin-2-Kuras 2 (386 aa).

A signal peptide spans 1 to 23 (MATTKSFLILFFMILATTSSTCA). Residues 32–229 (LSIDGGGIKG…TVGDPALLSL (198 aa)) form the PNPLA domain. Positions 36 to 41 (GGGIKG) match the GXGXXG motif. The short motif at 75–79 (GTSTG) is the GXSXG element. The active-site Nucleophile is Ser-77. A glycan (N-linked (GlcNAc...) asparagine) is linked at Asn-115. The Proton acceptor role is filled by Asp-215. A DGA/G motif is present at residues 215–217 (DGA). The stretch at 321–384 (ENALTGTTTE…DRKKLRANKA (64 aa)) forms a coiled coil.

Belongs to the patatin family.

The protein localises to the vacuole. Functionally, probable lipolytic acyl hydrolase (LAH), an activity which is thought to be involved in the response of tubers to pathogens. This chain is Patatin-2-Kuras 2 (pat2-k2), found in Solanum tuberosum (Potato).